A 360-amino-acid polypeptide reads, in one-letter code: Chorismate synthase (360 aa).

NADP(+) contacts are provided by Arg48 and Arg54. FMN-binding positions include 125 to 127, 246 to 247, Gly286, 301 to 305, and Arg327; these read RSS, NA, and KPTSS.

This sequence belongs to the chorismate synthase family. Homotetramer. FMNH2 serves as cofactor.

It catalyses the reaction 5-O-(1-carboxyvinyl)-3-phosphoshikimate = chorismate + phosphate. It functions in the pathway metabolic intermediate biosynthesis; chorismate biosynthesis; chorismate from D-erythrose 4-phosphate and phosphoenolpyruvate: step 7/7. Functionally, catalyzes the anti-1,4-elimination of the C-3 phosphate and the C-6 proR hydrogen from 5-enolpyruvylshikimate-3-phosphate (EPSP) to yield chorismate, which is the branch point compound that serves as the starting substrate for the three terminal pathways of aromatic amino acid biosynthesis. This reaction introduces a second double bond into the aromatic ring system. The polypeptide is Chorismate synthase (Actinobacillus succinogenes (strain ATCC 55618 / DSM 22257 / CCUG 43843 / 130Z)).